The chain runs to 358 residues: MGIKRLSKLIKTYCSEGVQNRELKYYSGYKIAIDASMCIYQFLVAVRAEGQSLSWGDSTTSHISGIFYRSIRWIENGIIPVFVFDGIPPEEKIHEFEKRTKRRQDINAKLQDAIEQQDQVLVSKYDRMNVKMEKSHIEECQKTLRLLNIPYVIAPSEAEAYCAWLCKSKFVDAVATEDMDSLCFGSPLLLRNFNTALSQKLPVEEYNLHKILEGLQFTMEQFVDLCILLGCDYSATIRGVGMKRAFEYIKKYKSIDNLIGIVDFPDDFKYKEARTIFFTLGTDTSNNFTNENPINTNIATWDLIAVDSASINIEAVIDFLCNEKGFDKGRIETGIKKLQKQKKVNKQTRIDSFFKKKL.

The segment at 1 to 103 (MGIKRLSKLI…HEFEKRTKRR (103 aa)) is N-domain. Asp-34 contacts Mg(2+). Residues Arg-47 and Arg-69 each coordinate DNA. Asp-85, Glu-157, Glu-159, Asp-178, and Asp-180 together coordinate Mg(2+). The I-domain stretch occupies residues 121 to 252 (LVSKYDRMNV…KRAFEYIKKY (132 aa)). Glu-157 contacts DNA. The DNA site is built by Gly-230 and Asp-232. Asp-232 is a Mg(2+) binding site. The tract at residues 346 to 354 (KQTRIDSFF) is interaction with PCNA.

It belongs to the XPG/RAD2 endonuclease family. FEN1 subfamily. In terms of assembly, interacts with PCNA. Three molecules of FEN1 bind to one PCNA trimer with each molecule binding to one PCNA monomer. PCNA stimulates the nuclease activity without altering cleavage specificity. Mg(2+) is required as a cofactor. In terms of processing, phosphorylated. Phosphorylation upon DNA damage induces relocalization to the nuclear plasma.

The protein resides in the nucleus. It localises to the nucleolus. Its subcellular location is the nucleoplasm. The protein localises to the mitochondrion. Functionally, structure-specific nuclease with 5'-flap endonuclease and 5'-3' exonuclease activities involved in DNA replication and repair. During DNA replication, cleaves the 5'-overhanging flap structure that is generated by displacement synthesis when DNA polymerase encounters the 5'-end of a downstream Okazaki fragment. It enters the flap from the 5'-end and then tracks to cleave the flap base, leaving a nick for ligation. Also involved in the long patch base excision repair (LP-BER) pathway, by cleaving within the apurinic/apyrimidinic (AP) site-terminated flap. Acts as a genome stabilization factor that prevents flaps from equilibrating into structures that lead to duplications and deletions. Also possesses 5'-3' exonuclease activity on nicked or gapped double-stranded DNA, and exhibits RNase H activity. Also involved in replication and repair of rDNA and in repairing mitochondrial DNA. The sequence is that of Flap endonuclease 1 from Enterocytozoon bieneusi (strain H348) (Microsporidian parasite).